We begin with the raw amino-acid sequence, 96 residues long: Small ribosomal subunit protein bS18 (96 aa).

The protein belongs to the bacterial ribosomal protein bS18 family. In terms of assembly, part of the 30S ribosomal subunit. Forms a tight heterodimer with protein bS6.

Its function is as follows. Binds as a heterodimer with protein bS6 to the central domain of the 16S rRNA, where it helps stabilize the platform of the 30S subunit. In Borreliella burgdorferi (strain ATCC 35210 / DSM 4680 / CIP 102532 / B31) (Borrelia burgdorferi), this protein is Small ribosomal subunit protein bS18.